A 520-amino-acid chain; its full sequence is Zinc finger and BTB domain-containing protein 45 (520 aa).

The BTB domain occupies 33–96; that stretch reads CDVTVRIREA…LYSGSLVVAQ (64 aa). 2 disordered regions span residues 182–272 and 337–372; these read PAPP…GGAG and FHLG…PDAA. Residues 206–225 are compositionally biased toward acidic residues; it reads RGEEDDDEETDEETDAEEGE. The span at 342–363 shows a compositional bias: pro residues; that stretch reads PGPPAPTPPTPSGPAPAPPPTF. C2H2-type zinc fingers lie at residues 412–434, 440–462, 468–490, and 495–517; these read YECS…MFIH, HQCA…MVTH, FQCA…MRTH, and APCP…LAAH.

It belongs to the krueppel C2H2-type zinc-finger protein family.

Its subcellular location is the nucleus. May be involved in transcriptional regulation. In the central nervous system, may play a role in glial cell differentiation. The polypeptide is Zinc finger and BTB domain-containing protein 45 (Mus musculus (Mouse)).